A 293-amino-acid chain; its full sequence is 4-hydroxy-tetrahydrodipicolinate synthase (293 aa).

Residue Thr47 coordinates pyruvate. Residue Tyr135 is the Proton donor/acceptor of the active site. The active-site Schiff-base intermediate with substrate is Lys164. Ile206 is a binding site for pyruvate.

It belongs to the DapA family. As to quaternary structure, homotetramer; dimer of dimers.

It is found in the cytoplasm. It carries out the reaction L-aspartate 4-semialdehyde + pyruvate = (2S,4S)-4-hydroxy-2,3,4,5-tetrahydrodipicolinate + H2O + H(+). It participates in amino-acid biosynthesis; L-lysine biosynthesis via DAP pathway; (S)-tetrahydrodipicolinate from L-aspartate: step 3/4. In terms of biological role, catalyzes the condensation of (S)-aspartate-beta-semialdehyde [(S)-ASA] and pyruvate to 4-hydroxy-tetrahydrodipicolinate (HTPA). The polypeptide is 4-hydroxy-tetrahydrodipicolinate synthase (Flavobacterium psychrophilum (strain ATCC 49511 / DSM 21280 / CIP 103535 / JIP02/86)).